Reading from the N-terminus, the 207-residue chain is 2,3-bisphosphoglycerate-dependent phosphoglycerate mutase (207 aa).

Residues 10 to 17, 23 to 24, Arg-62, 89 to 92, Lys-100, 116 to 117, and 160 to 161 each bind substrate; these read RHGQSEWN, TG, ERDY, RR, and GN. The active-site Tele-phosphohistidine intermediate is the His-11. Catalysis depends on Glu-89, which acts as the Proton donor/acceptor.

It belongs to the phosphoglycerate mutase family. BPG-dependent PGAM subfamily. In terms of assembly, homodimer.

The enzyme catalyses (2R)-2-phosphoglycerate = (2R)-3-phosphoglycerate. The protein operates within carbohydrate degradation; glycolysis; pyruvate from D-glyceraldehyde 3-phosphate: step 3/5. Functionally, catalyzes the interconversion of 2-phosphoglycerate and 3-phosphoglycerate. In Afipia carboxidovorans (strain ATCC 49405 / DSM 1227 / KCTC 32145 / OM5) (Oligotropha carboxidovorans), this protein is 2,3-bisphosphoglycerate-dependent phosphoglycerate mutase.